A 495-amino-acid chain; its full sequence is UDP-glycosyltransferase 73C12 (495 aa).

Residue His24 is the Proton acceptor of the active site. His24 provides a ligand contact to an anthocyanidin. The active-site Charge relay is Asp129. Positions 356, 358, 373, 376, 377, 378, and 381 each coordinate UDP-alpha-D-glucose. Position 396 (Ala396) interacts with an anthocyanidin. The UDP-alpha-D-glucose site is built by Asp397 and Gln398.

This sequence belongs to the UDP-glycosyltransferase family.

The catalysed reaction is oleanolate + UDP-alpha-D-glucose = oleanolate 3-O-beta-D-glucoside + UDP + H(+). In terms of biological role, catalyzes the transfer of a glucose (Glc) moiety from UDP-Glc to the C-3 position of the oleanane sapogenins oleanolate and hederagenin, and to the C-28 carboxylic group of the lupane sapogenin betulinate. The monoglucosylated hederagenin 3-O-beta-D-glucoside is a feeding deterrent of the yellow-striped flea beetle (Phyllotreta nemorum). The protein is UDP-glycosyltransferase 73C12 of Barbarea vulgaris (Yellow rocket).